Here is a 187-residue protein sequence, read N- to C-terminus: Putative manganese efflux pump MntP (187 aa).

A run of 6 helical transmembrane segments spans residues 3–23, 39–59, 65–85, 106–126, 129–149, and 166–186; these read YYTL…VSVG, IALC…YVGS, ISEF…INMI, LTML…SFAF, VNIW…SLFG, and LLGG…HRVF.

The protein belongs to the MntP (TC 9.B.29) family.

The protein localises to the cell inner membrane. In terms of biological role, probably functions as a manganese efflux pump. The protein is Putative manganese efflux pump MntP of Actinobacillus succinogenes (strain ATCC 55618 / DSM 22257 / CCUG 43843 / 130Z).